The sequence spans 206 residues: CASP-like protein 2C1 (206 aa).

Topologically, residues 1-31 are cytoplasmic; it reads MSVLGVGPRTVTPHLRKGMMESSSGISLARA. Residues 32-52 form a helical membrane-spanning segment; that stretch reads EAFLRLFAILVLVLTACLLGF. Residues 53–71 are Extracellular-facing; it reads DTQTKLLFSTIKKTATFRD. Residues 72–92 form a helical membrane-spanning segment; it reads LGALQVVVYVDSVAAGYNLLQ. Topologically, residues 93 to 111 are cytoplasmic; that stretch reads LGRGFISAKLKGKLINVSY. A helical transmembrane segment spans residues 112–132; the sequence is VTLPWVCFLLDQAAVYTVFSA. Over 133–161 the chain is Extracellular; the sequence is NTAALQASIIAVTGESSLQWMKVCNRYTR. Residues 162–182 form a helical membrane-spanning segment; that stretch reads FCIQVGGALLSGYLASLLMVL. Residues 183-206 are Cytoplasmic-facing; sequence LSSLSAFSLFRLYSPKQFHLLKPT.

The protein belongs to the Casparian strip membrane proteins (CASP) family. In terms of assembly, homodimer and heterodimers.

Its subcellular location is the cell membrane. In Vitis vinifera (Grape), this protein is CASP-like protein 2C1.